The chain runs to 664 residues: L-type lectin-domain containing receptor kinase I.3 (664 aa).

A signal peptide spans 1–21 (MACRLYLALIFSCVYLICLSS). Residues 22-286 (QQETGFVYNG…PKEEKKKLSP (265 aa)) lie on the Extracellular side of the membrane. Residues 24–257 (ETGFVYNGFE…NHYILGWSFS (234 aa)) are legume-lectin like. N-linked (GlcNAc...) asparagine glycosylation is found at Asn55, Asn125, Asn128, Asn181, Asn204, Asn225, and Asn267. The helical transmembrane segment at 287–307 (LLIGLVILLVIPVVMVLGGVY) threads the bilayer. Residues 308–664 (WYRRKKYAEV…THTILDGHGR (357 aa)) are Cytoplasmic-facing. Positions 342–619 (FRKDCRVGKG…LNQDLPLPIF (278 aa)) constitute a Protein kinase domain. Residues 348-356 (VGKGGFGEV) and Lys370 contribute to the ATP site. The Proton acceptor role is filled by Asp466.

The protein in the C-terminal section; belongs to the protein kinase superfamily. Ser/Thr protein kinase family. It in the N-terminal section; belongs to the leguminous lectin family. Autophosphorylated on Ser and Thr residues. Mostly expressed in roots and flowers, and, to a lower extent, in leaves.

The protein resides in the cell membrane. The enzyme catalyses L-seryl-[protein] + ATP = O-phospho-L-seryl-[protein] + ADP + H(+). It catalyses the reaction L-threonyl-[protein] + ATP = O-phospho-L-threonyl-[protein] + ADP + H(+). Functionally, involved in resistance response to the pathogenic fungus Alternaria brassicicola. The chain is L-type lectin-domain containing receptor kinase I.3 from Arabidopsis thaliana (Mouse-ear cress).